The primary structure comprises 156 residues: Transcription inhibitor protein Gfh1 (156 aa).

The stretch at 1–74 (MAREVKLTKA…LEDILSRAVI (74 aa)) forms a coiled coil.

The protein belongs to the GreA/GreB family. Interacts with RNAP.

In terms of biological role, inhibits all catalytic activities of RNA polymerase (RNAP) by partially occluding its substrate-binding site and preventing NTP binding. The sequence is that of Transcription inhibitor protein Gfh1 (gfh1) from Thermus thermophilus (strain ATCC BAA-163 / DSM 7039 / HB27).